We begin with the raw amino-acid sequence, 230 residues long: tRNA (guanine-N(7)-)-methyltransferase (230 aa).

S-adenosyl-L-methionine contacts are provided by glutamate 61, glutamate 86, asparagine 113, and aspartate 136. Aspartate 136 is a catalytic residue. Substrate-binding positions include lysine 140, aspartate 172, and 208-211 (TKYE).

The protein belongs to the class I-like SAM-binding methyltransferase superfamily. TrmB family.

The catalysed reaction is guanosine(46) in tRNA + S-adenosyl-L-methionine = N(7)-methylguanosine(46) in tRNA + S-adenosyl-L-homocysteine. It functions in the pathway tRNA modification; N(7)-methylguanine-tRNA biosynthesis. Functionally, catalyzes the formation of N(7)-methylguanine at position 46 (m7G46) in tRNA. This Mycobacterium leprae (strain Br4923) protein is tRNA (guanine-N(7)-)-methyltransferase.